Reading from the N-terminus, the 141-residue chain is Transcriptional regulator MraZ (141 aa).

SpoVT-AbrB domains follow at residues 5–47 (EFEH…PAER) and 76–119 (AAEC…GAEH).

This sequence belongs to the MraZ family. Forms oligomers.

Its subcellular location is the cytoplasm. It localises to the nucleoid. This Lactiplantibacillus plantarum (strain ATCC BAA-793 / NCIMB 8826 / WCFS1) (Lactobacillus plantarum) protein is Transcriptional regulator MraZ.